Consider the following 251-residue polypeptide: 3-deoxy-manno-octulosonate cytidylyltransferase (251 aa).

Belongs to the KdsB family.

The protein localises to the cytoplasm. It catalyses the reaction 3-deoxy-alpha-D-manno-oct-2-ulosonate + CTP = CMP-3-deoxy-beta-D-manno-octulosonate + diphosphate. The protein operates within nucleotide-sugar biosynthesis; CMP-3-deoxy-D-manno-octulosonate biosynthesis; CMP-3-deoxy-D-manno-octulosonate from 3-deoxy-D-manno-octulosonate and CTP: step 1/1. It participates in bacterial outer membrane biogenesis; lipopolysaccharide biosynthesis. In terms of biological role, activates KDO (a required 8-carbon sugar) for incorporation into bacterial lipopolysaccharide in Gram-negative bacteria. The polypeptide is 3-deoxy-manno-octulosonate cytidylyltransferase (Vibrio vulnificus (strain YJ016)).